The chain runs to 536 residues: Phosphoenolpyruvate carboxykinase (ATP) (536 aa).

Substrate is bound by residues Arg61, Tyr195, and Lys201. Residues Lys201, His220, and 236 to 244 contribute to the ATP site; that span reads GLSGTGKTT. Positions 201 and 220 each coordinate Mn(2+). Asp257 is a Mn(2+) binding site. The ATP site is built by Glu285, Arg322, and Thr447. Arg322 provides a ligand contact to substrate.

It belongs to the phosphoenolpyruvate carboxykinase (ATP) family. The cofactor is Mn(2+).

It localises to the cytoplasm. It carries out the reaction oxaloacetate + ATP = phosphoenolpyruvate + ADP + CO2. It functions in the pathway carbohydrate biosynthesis; gluconeogenesis. In terms of biological role, involved in the gluconeogenesis. Catalyzes the conversion of oxaloacetate (OAA) to phosphoenolpyruvate (PEP) through direct phosphoryl transfer between the nucleoside triphosphate and OAA. The chain is Phosphoenolpyruvate carboxykinase (ATP) from Rhizobium meliloti (strain 1021) (Ensifer meliloti).